Reading from the N-terminus, the 1933-residue chain is MLFHFFLRCNLASLCIKIVNSVVVVGLYYGLLTTFSIGPSYFFLLRAQVMEEGTEKKVSATTGFITGQLIMFISIYYAPLHRALARPHTITVLALPYLFVYFIFYTDKRFMHPRKNAMLNTTTSMRNFSIQCVFLNNLIFQLFNHFILPSSMVARLVNIYMFRCNNKMLFVTSSFVGWLIGHILFWKWLGLVLVWIRQNRSIRIRPNKYIPFYKLIRLDKYLVSKWGDRIFYILVILIWFYLGGKIPAPLLSMKFDESTIQLEKGAKGKKKKRGKGEEEGDVEKEDEVGVGEKKGEIDESEEIRVNGELFKSLVAHFFVFDPNHFATLLFDPNRWNRPFRYIKNDRFDNAFRTEMSQYFFDTCPSAGKERISFTYPPSLSTFWEMIERRISLPTLDKFSSNELSNHWVYTNEQKSNNLKNEFVNRIEALDKESVSLNRLETTSRLCNDNTTKEYLPEPYDPFLNGPYRRTIKKTKSLSPEKTSGDNLETSRDNLETSRDNLETSRDNLETSRDNLETSRDNLIDKIGINRIHSILLPDIPDTDYQKLEDQFDKKQLSIEIVDLFTFAFISEFGKKKGPKSESNLISRDLLISRDLSVFSDEKEVRIEDGKGVIIDDEKGKKYFEYLENRIGTNTDDENIDKDSIAKIRKKVSRWIYNATSELDQAYGEDERKDPMDNEIRSRDAKRVIVVPKEKLERDDDDDEEEPTDIDKIIFPEHGDFRRDVIWGSIRAQRRKIVIWRTLQRYTHSPLFLDSLKDFRHYFVDFLLDILNIFEPIWRIIRNLRIFLIKLIRKRFALKILEHREEQQTHREEKKKRKKDEKNEKNAKNAEDPEREPRLWVSEFWTIIEYAQEVRGCVLLTHSFIRRNIVIPLLIIVKNIGRMLLFQRPELYEDFEDWQRESHVKCTYEGIPLSETDFPEDWLVEGIQIKILYPFRLKPWHVPGSDSDQNRKKAEEKGDFCFLTVYGTETNLPFGYSRLPPPTFESFFKPIFQELKKQMRNSKKNIWKLGKMLFQKVKGTKFLRKVAKKWVRKSIILGKKIIEGLKKIKELVKKERDPITSNQMIPESFTQISSPSSTNSEKKRNKMQDLTNRANKARNEIERIRKEKKKKKRSLKKTSSNAKRLQRIKDRLIRKLPVYLKLFIQRIYTGIFFSIINIRRMSQKFRNKFIPDQERKDILPFIYTINKIKESLYTNNSEENSHIFYDLSYLSQAYVFYKLSEIQLSNLDKFKSVLQYQGIPFFLRSEIKDSFKTQGIVHSKRLPSSEMNQWKNWLRGHSQYDLSKTRWSILIPQRWRNRVHRMVKRKNFNKRNLYEKYEKDQFIDSKKENICEVSNRNQKDDNFQKCCKYDLLSYKSIHSENKKDSRSLFDKLSFNSNTAFFDLLVDRARGMPIDINNLTGTGDIPYTEKTPDRKYLDWKMIHFDFIRNQLDIENWITIDVNRKDNRNQKTPIYTNNYLTNDHDTNFEIIYKIDKKTKKPILDLDFLRIPEKNPSNSSKGFLDWMGLNETQTHPVVLNKFNRLKMEANLFPEIVLFYNAYKTQPWLLSSKLLLLNLNNNENEINADNEKNEKKEAKKEAKKEAKKEAKKEEKQNIKKELTTKGDLENKGDLESVPSKEKNPSKDSKEKKDIQKDSAESTTKKVTSKELQKELDAFLQRYSGYLVKWNRRVDPDIVPKSEINWEVYSYLYRLFDDENPRNRKEIDPTHLVLSSAKRGELAFEILATRPIQSWKKLLLKRKELVFFEPIRLFGKNNGQFIMYQTIGISLVHNNKHEIQPRFRKKKKRYGSKTNFDESIPPHERITRNDERIPTNDEDEKRNKRLRINYERNADKNHLDLLVPENIFSFRRRRKLRILNCLNSKNRNDVDRNPVFCNEKNSSQDLDREKNLLMKLKFFLWPNYRLEDLACMNRYWFDTNNGSRFSMLRIRLYPRLKIR.

Transmembrane regions (helical) follow at residues 18–38, 60–80, 87–107, 128–148, 176–196, and 230–250; these read IVNSVVVVGLYYGLLTTFSIG, ATTGFITGQLIMFISIYYAPL, PHTITVLALPYLFVYFIFYTD, FSIQCVFLNNLIFQLFNHFIL, VGWLIGHILFWKWLGLVLVWI, and IFYILVILIWFYLGGKIPAPL. 4 disordered regions span residues 266-291, 473-514, 808-832, and 1066-1121; these read AKGKKKKRGKGEEEGDVEKEDEVGVG, KTKS…SRDN, THREEKKKRKKDEKNEKNAKNAEDP, and ESFT…SSNA. A compositionally biased stretch (acidic residues) spans 278–289; sequence EEGDVEKEDEVG. Residues 476 to 487 show a composition bias toward polar residues; that stretch reads SLSPEKTSGDNL. Basic and acidic residues-rich tracts occupy residues 488–514 and 819–832; these read ETSRDNLETSRDNLETSRDNLETSRDN and DEKNEKNAKNAEDP. The span at 1066 to 1078 shows a compositional bias: polar residues; the sequence is ESFTQISSPSSTN. A compositionally biased stretch (basic residues) spans 1105–1115; the sequence is KEKKKKKRSLK. A helical transmembrane segment spans residues 1135 to 1155; that stretch reads LPVYLKLFIQRIYTGIFFSII. The disordered stretch occupies residues 1562–1642; sequence NADNEKNEKK…SAESTTKKVT (81 aa). Positions 1564–1642 are enriched in basic and acidic residues; it reads DNEKNEKKEA…SAESTTKKVT (79 aa).

It belongs to the TIC214 family. As to quaternary structure, part of the Tic complex.

It localises to the plastid. It is found in the chloroplast inner membrane. Functionally, involved in protein precursor import into chloroplasts. May be part of an intermediate translocation complex acting as a protein-conducting channel at the inner envelope. The chain is Protein TIC 214 from Jasminum nudiflorum (Winter jasmine).